A 188-amino-acid chain; its full sequence is Josephin-2 (188 aa).

The Josephin domain occupies 11 to 188 (PPTVYHERQR…EEKGSWLRTD (178 aa)). The active-site Nucleophile is Cys-24. The active-site Proton acceptor is the His-125.

It is found in the cytoplasm. Its subcellular location is the cytosol. It catalyses the reaction Thiol-dependent hydrolysis of ester, thioester, amide, peptide and isopeptide bonds formed by the C-terminal Gly of ubiquitin (a 76-residue protein attached to proteins as an intracellular targeting signal).. Cleaves 'Lys-63'-linked poly-ubiquitin chains, and with lesser efficiency 'Lys-48'-linked poly-ubiquitin chains (in vitro). May act as a deubiquitinating enzyme. The chain is Josephin-2 (JOSD2) from Homo sapiens (Human).